We begin with the raw amino-acid sequence, 437 residues long: Protein RecA (437 aa).

69 to 76 (GPESSGKT) contributes to the ATP binding site. A disordered region spans residues 343–437 (HDAAVRTSPD…GNGKSVKRKG (95 aa)). Composition is skewed to polar residues over residues 350–371 (SPDT…SGSP), 380–391 (GAVNNSRDSTGG), and 400–426 (LNLS…NQKP).

Belongs to the RecA family.

The protein resides in the cytoplasm. In terms of biological role, can catalyze the hydrolysis of ATP in the presence of single-stranded DNA, the ATP-dependent uptake of single-stranded DNA by duplex DNA, and the ATP-dependent hybridization of homologous single-stranded DNAs. It interacts with LexA causing its activation and leading to its autocatalytic cleavage. The protein is Protein RecA of Tropheryma whipplei (strain Twist) (Whipple's bacillus).